Reading from the N-terminus, the 214-residue chain is Octanoyltransferase (214 aa).

The 181-residue stretch at Gly-34–Asn-214 folds into the BPL/LPL catalytic domain. Substrate-binding positions include Arg-73–His-80, Ala-145–Gly-147, and Gly-158–Ser-160. Cys-176 acts as the Acyl-thioester intermediate in catalysis.

Belongs to the LipB family.

The protein localises to the cytoplasm. It catalyses the reaction octanoyl-[ACP] + L-lysyl-[protein] = N(6)-octanoyl-L-lysyl-[protein] + holo-[ACP] + H(+). It functions in the pathway protein modification; protein lipoylation via endogenous pathway; protein N(6)-(lipoyl)lysine from octanoyl-[acyl-carrier-protein]: step 1/2. Its function is as follows. Catalyzes the transfer of endogenously produced octanoic acid from octanoyl-acyl-carrier-protein onto the lipoyl domains of lipoate-dependent enzymes. Lipoyl-ACP can also act as a substrate although octanoyl-ACP is likely to be the physiological substrate. This Ehrlichia canis (strain Jake) protein is Octanoyltransferase.